The chain runs to 318 residues: DNA repair nuclease/redox regulator APEX1 (318 aa).

A necessary for interaction with YBX1, binding to RNA, association together with NPM1 to rRNA, endoribonuclease activity on abasic RNA and localization in the nucleoli region spans residues 1-33 (MPKRGKKGAVAEDGDELKTEPEAKKSKTTAKKN). Residues 1 to 60 (MPKRGKKGAVAEDGDELKTEPEAKKSKTTAKKNDKEAAGEGPALYEDPPDQKTSPSGKPA) form a disordered region. An N6-acetyllysine; by EP300 mark is found at Lys-6 and Lys-7. The Nuclear localization signal (NLS) signature appears at 8 to 13 (GAVAED). The span at 16–38 (ELKTEPEAKKSKTTAKKNDKEAA) shows a compositional bias: basic and acidic residues. The interval 23 to 33 (AKKSKTTAKKN) is necessary for interaction with NPM1 and for efficient rRNA binding. An N6-acetyllysine mark is found at Lys-27, Lys-31, Lys-32, and Lys-35. The residue at position 54 (Ser-54) is a Phosphoserine. A Nuclear export signal (NES) motif is present at residues 64-80 (ICSWNVDGLRAWIKKKG). Cys-65 is modified (S-nitrosocysteine; alternate). A disulfide bridge links Cys-65 with Cys-93. Asp-70 is a Mg(2+) binding site. Cys-93 bears the S-nitrosocysteine; alternate mark. Glu-96 contacts Mg(2+). The active site involves Tyr-171. At Lys-197 the chain carries N6-acetyllysine. Mg(2+) is bound by residues Asp-210 and Asn-212. Asp-210 (proton donor/acceptor) is an active-site residue. Position 233 is a phosphothreonine; by CDK5 (Thr-233). A mitochondrial targeting sequence (MTS) region spans residues 289-318 (HSLLTALCDSKIRSKALGSDHCPITLYLAL). Residue Asp-308 coordinates Mg(2+). Cys-310 is subject to S-nitrosocysteine.

The protein belongs to the DNA repair enzymes AP/ExoA family. As to quaternary structure, monomer. Homodimer; disulfide-linked. Component of the SET complex, composed of at least APEX1, SET, ANP32A, HMGB2, NME1 and TREX1. Associates with the dimer XRCC5/XRCC6 in a DNA-dependent manner. Interacts with SIRT1; the interaction is increased in the context of genotoxic stress. Interacts with HDAC1, HDAC2 and HDAC3; the interactions are not dependent on the APEX1 acetylation status. Interacts with XRCC1; the interaction is induced by SIRT1 and increased with the APEX1 acetylated form. Interacts with NPM1 (via N-terminal domain); the interaction is RNA-dependent and decreases in hydrogen peroxide-damaged cells. Interacts (via N-terminus) with YBX1 (via C-terminus); the interaction is increased in presence of APEX1 acetylated at Lys-6 and Lys-7. Interacts with HNRNPL; the interaction is DNA-dependent. Interacts (via N-terminus) with KPNA1 and KPNA2. Interacts with TXN; the interaction stimulates the FOS/JUN AP-1 complex DNA-binding activity in a redox-dependent manner. Interacts with GZMA, KRT8, MDM2, POLB, PRDX6, PRPF19, RPLP0, TOMM20 and WDR77. Binds to CDK5. Mg(2+) serves as cofactor. The cofactor is Mn(2+). Post-translationally, phosphorylated. Phosphorylation by kinase PKC or casein kinase CK2 results in enhanced redox activity that stimulates binding of the FOS/JUN AP-1 complex to its cognate binding site. AP-endodeoxyribonuclease activity is not affected by CK2-mediated phosphorylation. Phosphorylation of Thr-233 by CDK5 in response to MPP(+)/MPTP (1-methyl-4-phenylpyridinium) reduces AP-endodeoxyribonuclease activity resulting in accumulation of DNA damage and contributing to neuronal death. In terms of processing, acetylated on Lys-6 and Lys-7. Acetylation is increased by the transcriptional coactivator EP300 acetyltransferase, genotoxic agents like H(2)O(2) and methyl methanesulfonate (MMS). Acetylation increases its binding affinity to the negative calcium response element (nCaRE) DNA promoter. The acetylated form induces a stronger binding of YBX1 to the Y-box sequence in the MDR1 promoter than the unacetylated form. Deacetylated on lysines. Lys-6 and Lys-7 are deacetylated by SIRT1. Cleaved at Lys-31 by granzyme A to create the mitochondrial form; leading in reduction of binding to DNA, AP endodeoxyribonuclease activity, redox activation of transcription factors and to enhanced cell death. Cleaved by granzyme K; leading to intracellular ROS accumulation and enhanced cell death after oxidative stress. Post-translationally, cys-69 and Cys-93 are nitrosylated in response to nitric oxide (NO) and lead to the exposure of the nuclear export signal (NES). In terms of processing, ubiquitinated by MDM2; leading to translocation to the cytoplasm and proteasomal degradation.

Its subcellular location is the nucleus. The protein localises to the nucleolus. It localises to the nucleus speckle. The protein resides in the endoplasmic reticulum. It is found in the cytoplasm. Its subcellular location is the mitochondrion. It catalyses the reaction a deoxyribonucleotide-2'-deoxyribose-5'-monophosphate-DNA + H2O = a 5'-end 2'-deoxyribose-5'-monophosphate-DNA + a 3'-end 2'-deoxyribonucleotide-DNA + H(+). It carries out the reaction Exonucleolytic cleavage in the 3'- to 5'-direction to yield nucleoside 5'-phosphates.. The enzyme catalyses a 3'-end 2'-deoxyribonucleotide-3'-phosphoglycolate-DNA + H2O = 2-phosphoglycolate + a 3'-end 2'-deoxyribonucleotide-DNA + H(+). The catalysed reaction is a 3'-end 2'-deoxyribonucleotide-8-oxoguanine-DNA + H2O = 8-oxo-dGMP + a 3'-end 2'-deoxyribonucleotide-DNA + H(+). Its activity is regulated as follows. NPM1 stimulates endodeoxyribonuclease activity on double-stranded DNA with AP sites, but inhibits endoribonuclease activity on single-stranded RNA containing AP sites. Its function is as follows. Multifunctional protein that plays a central role in the cellular response to oxidative stress. The two major activities of APEX1 are DNA repair and redox regulation of transcriptional factors. Functions as an apurinic/apyrimidinic (AP) endodeoxyribonuclease in the base excision repair (BER) pathway of DNA lesions induced by oxidative and alkylating agents. Initiates repair of AP sites in DNA by catalyzing hydrolytic incision of the phosphodiester backbone immediately adjacent to the damage, generating a single-strand break with 5'-deoxyribose phosphate and 3'-hydroxyl ends. Also incises at AP sites in the DNA strand of DNA/RNA hybrids, single-stranded DNA regions of R-loop structures, and single-stranded RNA molecules. Operates at switch sites of immunoglobulin (Ig) constant regions where it mediates Ig isotype class switch recombination. Processes AP sites induced by successive action of AICDA and UNG. Generates staggered nicks in opposite DNA strands resulting in the formation of double-strand DNA breaks that are finally resolved via non-homologous end joining repair pathway. Has 3'-5' exodeoxyribonuclease activity on mismatched deoxyribonucleotides at the 3' termini of nicked or gapped DNA molecules during short-patch BER. Possesses DNA 3' phosphodiesterase activity capable of removing lesions (such as phosphoglycolate and 8-oxoguanine) blocking the 3' side of DNA strand breaks. Also acts as an endoribonuclease involved in the control of single-stranded RNA metabolism. Plays a role in regulating MYC mRNA turnover by preferentially cleaving in between UA and CA dinucleotides of the MYC coding region determinant (CRD). In association with NMD1, plays a role in the rRNA quality control process during cell cycle progression. Acts as a loading factor for POLB onto non-incised AP sites in DNA and stimulates the 5'-terminal deoxyribose 5'-phosphate (dRp) excision activity of POLB. Exerts reversible nuclear redox activity to regulate DNA binding affinity and transcriptional activity of transcriptional factors by controlling the redox status of their DNA-binding domain, such as the FOS/JUN AP-1 complex after exposure to IR. Involved in calcium-dependent down-regulation of parathyroid hormone (PTH) expression by binding to negative calcium response elements (nCaREs). Together with HNRNPL or the dimer XRCC5/XRCC6, associates with nCaRE, acting as an activator of transcriptional repression. May also play a role in the epigenetic regulation of gene expression by participating in DNA demethylation. Stimulates the YBX1-mediated MDR1 promoter activity, when acetylated at Lys-6 and Lys-7, leading to drug resistance. Plays a role in protection from granzyme-mediated cellular repair leading to cell death. Binds DNA and RNA. Associates, together with YBX1, on the MDR1 promoter. Together with NPM1, associates with rRNA. This Pongo pygmaeus (Bornean orangutan) protein is DNA repair nuclease/redox regulator APEX1 (APEX1).